A 150-amino-acid polypeptide reads, in one-letter code: Protein SprT-like (150 aa).

Residues Glu11 to Glu149 enclose the SprT-like domain. Residue His70 participates in Zn(2+) binding. Glu71 is a catalytic residue. His74 is a binding site for Zn(2+).

Belongs to the SprT family. The cofactor is Zn(2+).

It localises to the cytoplasm. The polypeptide is Protein SprT-like (Oceanobacillus iheyensis (strain DSM 14371 / CIP 107618 / JCM 11309 / KCTC 3954 / HTE831)).